Reading from the N-terminus, the 103-residue chain is NAD(P)H-quinone oxidoreductase subunit 4L, organellar chromatophore (103 aa).

3 consecutive transmembrane segments (helical) span residues 3-23 (IMLE…VWGL), 32-52 (VLMS…AFSN), and 63-83 (VFAI…LAIL).

Belongs to the complex I subunit 4L family. NDH is composed of at least 16 different subunits, 5 of which are encoded in the nucleus.

It localises to the plastid. It is found in the organellar chromatophore thylakoid membrane. It catalyses the reaction a plastoquinone + NADH + (n+1) H(+)(in) = a plastoquinol + NAD(+) + n H(+)(out). The enzyme catalyses a plastoquinone + NADPH + (n+1) H(+)(in) = a plastoquinol + NADP(+) + n H(+)(out). Functionally, NDH shuttles electrons from NAD(P)H:plastoquinone, via FMN and iron-sulfur (Fe-S) centers, to quinones in the photosynthetic chain and possibly in a chloroplast respiratory chain. The immediate electron acceptor for the enzyme in this species is believed to be plastoquinone. Couples the redox reaction to proton translocation, and thus conserves the redox energy in a proton gradient. This is NAD(P)H-quinone oxidoreductase subunit 4L, organellar chromatophore from Paulinella chromatophora.